A 292-amino-acid chain; its full sequence is 4-hydroxy-tetrahydrodipicolinate synthase (292 aa).

T45 provides a ligand contact to pyruvate. The Proton donor/acceptor role is filled by Y133. The active-site Schiff-base intermediate with substrate is the K161. I203 contributes to the pyruvate binding site.

This sequence belongs to the DapA family. In terms of assembly, homotetramer; dimer of dimers.

The protein localises to the cytoplasm. The catalysed reaction is L-aspartate 4-semialdehyde + pyruvate = (2S,4S)-4-hydroxy-2,3,4,5-tetrahydrodipicolinate + H2O + H(+). It participates in amino-acid biosynthesis; L-lysine biosynthesis via DAP pathway; (S)-tetrahydrodipicolinate from L-aspartate: step 3/4. Its function is as follows. Catalyzes the condensation of (S)-aspartate-beta-semialdehyde [(S)-ASA] and pyruvate to 4-hydroxy-tetrahydrodipicolinate (HTPA). The polypeptide is 4-hydroxy-tetrahydrodipicolinate synthase (Sodalis glossinidius (strain morsitans)).